The primary structure comprises 144 residues: Small ribosomal subunit protein eS12y (144 aa).

N-acetylserine is present on serine 2.

The protein belongs to the eukaryotic ribosomal protein eS12 family.

The chain is Small ribosomal subunit protein eS12y (RPS12C) from Arabidopsis thaliana (Mouse-ear cress).